Reading from the N-terminus, the 153-residue chain is Melatonin receptor type 1A X2.0 (153 aa).

Residues 1 to 12 (HSSWYNRLFSNS) lie on the Cytoplasmic side of the membrane. The helical transmembrane segment at 13-33 (GTICYVGLVWVLALGAILPNL) threads the bilayer. Residues 34 to 57 (FVGSLRCDPRIFSCTFAQYVSSYY) lie on the Extracellular side of the membrane. Residues 58-78 (TIAVVIFHFFLPIGVVSYCYL) traverse the membrane as a helical segment. Over 79–112 (RIWVLVLNIRHRVKPDRHLHHQTWPYNIHGFITM) the chain is Cytoplasmic. A helical transmembrane segment spans residues 113 to 133 (FVVFVLFAVCWGPLNIIGLTV). The Extracellular segment spans residues 134 to 145 (AIYPPLGDSIPQ). A helical membrane pass occupies residues 146–153 (WLFVASYF).

The protein belongs to the G-protein coupled receptor 1 family.

It is found in the cell membrane. In terms of biological role, high affinity receptor for melatonin. The activity of this receptor is mediated by pertussis toxin sensitive G proteins that inhibits adenylate cyclase activity. In Xenopus laevis (African clawed frog), this protein is Melatonin receptor type 1A X2.0.